The chain runs to 57 residues: Large ribosomal subunit protein bL32 (57 aa).

It belongs to the bacterial ribosomal protein bL32 family.

This chain is Large ribosomal subunit protein bL32, found in Staphylococcus epidermidis (strain ATCC 35984 / DSM 28319 / BCRC 17069 / CCUG 31568 / BM 3577 / RP62A).